The sequence spans 486 residues: MSSSVEAEASAAAPLGSNNTRRFVDSALSACNGMIPTTEFHCWLADRLGENSFETNRIPFDRLSKWKFDASTENLVHADGRFFTVEGLQVETNYGAAPSWHQPIINQAEVGILGILVKEIDGVLHCLMSAKMEPGNVNVLQLSPTVQATRSNYTQAHRGSVPPYVDYFLGRGRGRVLVDVLQSEQGSWFYRKRNRNMVVEVQEEVPVLPDFCWLTLGQVLALLRQDNIVNMDTRTVLSCIPFHDSATGPELAASEEPFRQAVARSLSHGIDSSSISEAVGWFEEAKARYRLRATRVPLSRVDKWYRTDTEIAHQDGKYFAVIAVSVSATNREVASWTQPMIEPREQGEIALLVKRIGGVLHGLVHARVEAGYKWTAEIAPTVQCSVANYQSTPSNDWPPFLDDVLTADPETVRYESILSEEGGRFYQAQNRYRIIEVHEDFAARPPSDFRWMTLGQLGELLRSTHFLNIQARSLVASLHSLWALGR.

DTDP-4-dehydro-6-deoxy-alpha-D-glucose-binding positions include W66, 149–153 (TRSNY), S187, W304, R367, 383–385 (QCS), 388–389 (NY), and 421–424 (EGGR).

Belongs to the hexose 2,3-dehydratase family. As to quaternary structure, homodimer.

It carries out the reaction dTDP-4-dehydro-6-deoxy-alpha-D-glucose = dTDP-3,4-didehydro-2,6-dideoxy-alpha-D-glucose + H2O. In terms of biological role, involved in the biosynthesis of forosamine ((4-dimethylamino)-2,3,4,6-tetradeoxy-alpha-D-threo-hexopyranose), a highly deoxygenated sugar component of several bioactive natural products such as the insecticidal spinosyns A and D. Catalyzes the removal of the hydroxyl group at position C-2 of the hexose ring of dTDP-4-dehydro-6-deoxy-alpha-D-glucopyranose, and the oxidation of the hydroxyl group at position C-3 to form a carbonyl functionality. The product of the reaction, dTDP-2,6-dideoxy-D-glycero-hex-2-enos-4-ulose, is a highly unstable diketosugar, which spontaneously forms dTDP-3,4-didehydro-2,6-dideoxy-alpha-D-glucose. The protein is dTDP-4-dehydro-6-deoxy-alpha-D-glucopyranose 2,3-dehydratase of Saccharopolyspora spinosa.